Consider the following 478-residue polypeptide: Kynurenine 3-monooxygenase (478 aa).

Residues V19, Y37–R40, and A57 each bind FAD. 2 residues coordinate L-kynurenine: R85 and Y99. FAD contacts are provided by residues R111, L136, T172, D304, and M317 to N318. L-kynurenine contacts are provided by N363 and Y398. Transmembrane regions (helical) follow at residues F385 to T404 and G425 to L445.

The protein belongs to the aromatic-ring hydroxylase family. KMO subfamily. It depends on FAD as a cofactor. Highest activity in liver and kidney. Low activity in spleen, stomach, intestinal tract, esophagus, heart and lung.

The protein resides in the mitochondrion outer membrane. It catalyses the reaction L-kynurenine + NADPH + O2 + H(+) = 3-hydroxy-L-kynurenine + NADP(+) + H2O. Its pathway is cofactor biosynthesis; NAD(+) biosynthesis; quinolinate from L-kynurenine: step 1/3. Functionally, catalyzes the hydroxylation of L-kynurenine (L-Kyn) to form 3-hydroxy-L-kynurenine (L-3OHKyn). Required for synthesis of quinolinic acid, a neurotoxic NMDA receptor antagonist and potential endogenous inhibitor of NMDA receptor signaling in axonal targeting, synaptogenesis and apoptosis during brain development. Quinolinic acid may also affect NMDA receptor signaling in pancreatic beta cells, osteoblasts, myocardial cells, and the gastrointestinal tract. The protein is Kynurenine 3-monooxygenase of Rattus norvegicus (Rat).